Reading from the N-terminus, the 1154-residue chain is Nitric oxide synthase, inducible (1154 aa).

The segment at 22 to 58 is disordered; sequence KDINNNVEKPPGATPSPSTQDDLKNHKHHNDSPQPLT. The DINNN-motif; mediates interaction with SPSB1, SPSB2 and SPSB4 signature appears at 23–27; sequence DINNN. Zn(2+)-binding residues include Cys107 and Cys112. Cys197 provides a ligand contact to heme b. L-arginine-binding residues include Gln260, Trp369, Tyr370, and Glu374. Residues Arg378, Ile459, Trp460, and Phe473 each coordinate (6R)-L-erythro-5,6,7,8-tetrahydrobiopterin. Tyr488 serves as a coordination point for heme b. Positions 512 to 532 are calmodulin-binding; it reads LKVLVKAVLFASMLMRKTMAS. One can recognise a Flavodoxin-like domain in the interval 536 to 674; it reads VTILFATETG…AFRCWAVQTF (139 aa). Positions 542, 543, 544, 546, and 547 each coordinate FMN. Tyr572 bears the Phosphotyrosine mark. 5 residues coordinate FMN: Ser588, Thr589, Ser625, Cys632, and Glu658. The FAD-binding FR-type domain occupies 727–967; sequence KNVFTLRLKS…VRSAGNFKLP (241 aa). An NADP(+)-binding site is contributed by Arg747. Positions 769, 903, 905, 906, 921, 923, 927, 940, 941, and 942 each coordinate FAD. Residues Thr981, Arg1014, Ser1043, Arg1044, Lys1050, Tyr1052, Gln1054, and Asp1087 each coordinate NADP(+).

This sequence belongs to the NOS family. Homodimer. Interacts with NHERF1. Interacts with GAPDH; induced by oxidatively-modified low-densitity lipoprotein (LDL(ox)). Interacts with S100A8 and S100A9 to form the iNOS-S100A8/9 transnitrosylase complex. Interacts with SPSB1, SPSB2 and SPSB4. Interacts with ELOC and CUL5 in the presence of SPSB1 or SPSB2 or SPSB4. Forms a complex with ASL, ASS1 and HSP90AA1; the complex regulates cell-autonomous L-arginine synthesis and citrulline recycling while channeling extracellular L-arginine to nitric oxide synthesis pathway. The cofactor is heme b. FAD is required as a cofactor. FMN serves as cofactor. Requires (6R)-L-erythro-5,6,7,8-tetrahydrobiopterin as cofactor. In terms of processing, polyubiquitinated; mediated by SPSB1, SPSB2 and SPSB4, leading to proteasomal degradation.

Its subcellular location is the cytoplasm. The protein localises to the cytosol. It catalyses the reaction 2 L-arginine + 3 NADPH + 4 O2 + H(+) = 2 L-citrulline + 2 nitric oxide + 3 NADP(+) + 4 H2O. Its activity is regulated as follows. Regulated by calcium/calmodulin. Its function is as follows. Produces nitric oxide (NO) which is a messenger molecule with diverse functions throughout the body. In macrophages, NO mediates tumoricidal and bactericidal actions. Also has nitrosylase activity and mediates cysteine S-nitrosylation of cytoplasmic target proteins such PTGS2/COX2. As component of the iNOS-S100A8/9 transnitrosylase complex involved in the selective inflammatory stimulus-dependent S-nitrosylation of GAPDH implicated in regulation of the GAIT complex activity and probably multiple targets including ANXA5, EZR, MSN and VIM. Involved in inflammation, enhances the synthesis of pro-inflammatory mediators such as IL6 and IL8. The chain is Nitric oxide synthase, inducible (NOS2) from Canis lupus familiaris (Dog).